The chain runs to 225 residues: NAD(P)H-quinone oxidoreductase subunit K, chloroplastic (225 aa).

Residues Cys43, Cys44, Cys108, and Cys139 each coordinate [4Fe-4S] cluster.

Belongs to the complex I 20 kDa subunit family. NDH is composed of at least 16 different subunits, 5 of which are encoded in the nucleus. [4Fe-4S] cluster is required as a cofactor.

The protein localises to the plastid. It localises to the chloroplast thylakoid membrane. The enzyme catalyses a plastoquinone + NADH + (n+1) H(+)(in) = a plastoquinol + NAD(+) + n H(+)(out). The catalysed reaction is a plastoquinone + NADPH + (n+1) H(+)(in) = a plastoquinol + NADP(+) + n H(+)(out). In terms of biological role, NDH shuttles electrons from NAD(P)H:plastoquinone, via FMN and iron-sulfur (Fe-S) centers, to quinones in the photosynthetic chain and possibly in a chloroplast respiratory chain. The immediate electron acceptor for the enzyme in this species is believed to be plastoquinone. Couples the redox reaction to proton translocation, and thus conserves the redox energy in a proton gradient. The sequence is that of NAD(P)H-quinone oxidoreductase subunit K, chloroplastic from Amborella trichopoda.